The sequence spans 397 residues: 1-deoxy-D-xylulose 5-phosphate reductoisomerase (397 aa).

T12, G13, S14, I15, G38, K39, N40, and N126 together coordinate NADPH. K127 is a 1-deoxy-D-xylulose 5-phosphate binding site. Residue E128 participates in NADPH binding. D152 serves as a coordination point for Mn(2+). 1-deoxy-D-xylulose 5-phosphate is bound by residues S153, E154, S188, and H211. Residue E154 participates in Mn(2+) binding. G217 is an NADPH binding site. 4 residues coordinate 1-deoxy-D-xylulose 5-phosphate: S224, N229, K230, and E233. E233 provides a ligand contact to Mn(2+).

Belongs to the DXR family. It depends on Mg(2+) as a cofactor. Mn(2+) serves as cofactor.

The enzyme catalyses 2-C-methyl-D-erythritol 4-phosphate + NADP(+) = 1-deoxy-D-xylulose 5-phosphate + NADPH + H(+). Its pathway is isoprenoid biosynthesis; isopentenyl diphosphate biosynthesis via DXP pathway; isopentenyl diphosphate from 1-deoxy-D-xylulose 5-phosphate: step 1/6. Functionally, catalyzes the NADPH-dependent rearrangement and reduction of 1-deoxy-D-xylulose-5-phosphate (DXP) to 2-C-methyl-D-erythritol 4-phosphate (MEP). The polypeptide is 1-deoxy-D-xylulose 5-phosphate reductoisomerase (Haemophilus influenzae (strain ATCC 51907 / DSM 11121 / KW20 / Rd)).